The sequence spans 355 residues: Putative GPI-anchor transamidase (355 aa).

The first 24 residues, 1–24 (MFNIMLVKFVVIFALILASCRVEA), serve as a signal peptide directing secretion. Residues H165 and C207 contribute to the active site.

The protein belongs to the peptidase C13 family.

The protein operates within glycolipid biosynthesis; glycosylphosphatidylinositol-anchor biosynthesis. Mediates GPI anchoring in the endoplasmic reticulum, by replacing a protein's C-terminal GPI attachment signal peptide with a pre-assembled GPI. During this transamidation reaction, the GPI transamidase forms a carbonyl intermediate with the substrate protein. The protein is Putative GPI-anchor transamidase of Drosophila melanogaster (Fruit fly).